The following is a 145-amino-acid chain: Transcriptional regulator MraZ (145 aa).

2 consecutive SpoVT-AbrB domains span residues 7 to 54 and 83 to 126; these read NATN…GPDL and GVFM…QPQA.

This sequence belongs to the MraZ family. In terms of assembly, forms oligomers.

It is found in the cytoplasm. The protein localises to the nucleoid. The sequence is that of Transcriptional regulator MraZ from Rhizobium johnstonii (strain DSM 114642 / LMG 32736 / 3841) (Rhizobium leguminosarum bv. viciae).